Consider the following 264-residue polypeptide: MKIEAVIFDWAGTTVDYGCFAPLEVFMEIFKNRGVMITAEEARRPMGLLKIDHVRALTEMPRIRGEWERVFGQLPTEADVQEMYEEFEEILFSILPRYATPISGVKEVVTYLRSQGIKIGSTTGYTREMMDIVAREAKAQGYEPDYLVTPDDVPAGRPYPWMCYQNAMQLNVYPMKHMVKVGDTISDMKEGRNAGMWTVGVILGSSELGLTEKEVESMDLVALQERMEVVRKRFIESGAHYVIETMKELPQVIEYIEKQEFIIS.

Asp9 (nucleophile) is an active-site residue. Mg(2+)-binding residues include Asp9 and Ala11. Lys50 functions as the Schiff-base intermediate with substrate in the catalytic mechanism. Asp183 contacts Mg(2+).

The protein belongs to the HAD-like hydrolase superfamily. PhnX family. In terms of assembly, homodimer. Mg(2+) serves as cofactor.

It carries out the reaction phosphonoacetaldehyde + H2O = acetaldehyde + phosphate + H(+). In terms of biological role, involved in phosphonate degradation. The polypeptide is Phosphonoacetaldehyde hydrolase (Bacillus cytotoxicus (strain DSM 22905 / CIP 110041 / 391-98 / NVH 391-98)).